Reading from the N-terminus, the 428-residue chain is Spliceosome RNA helicase Ddx39b (428 aa).

A compositionally biased stretch (acidic residues) spans 1–19 (MAENDVDNELLDYEDDEVE). The segment at 1 to 31 (MAENDVDNELLDYEDDEVETAAGADGTEAPA) is disordered. Ala-2 carries the post-translational modification N-acetylalanine. Lys-36 carries the N6-acetyllysine; alternate modification. A Glycyl lysine isopeptide (Lys-Gly) (interchain with G-Cter in SUMO2); alternate cross-link involves residue Lys-36. 2 positions are modified to phosphoserine: Ser-38 and Ser-41. Positions 45 to 73 (SGFRDFLLKPELLRAIVDCGFEHPSEVQH) match the Q motif motif. Residues 76 to 249 (IPQAILGMDV…RKFMQDPMEI (174 aa)) form the Helicase ATP-binding domain. ATP is bound at residue 89-96 (AKSGMGKT). At Thr-172 the chain carries Phosphothreonine. The DECD box motif lies at 196 to 199 (DECD). The Helicase C-terminal domain maps to 261–422 (GLQQYYVKLK…ELPDEIDISS (162 aa)).

It belongs to the DEAD box helicase family. DECD subfamily. Homodimer, and heterodimer with DDX39A. DDX39B interacts with the THO subcomplex to form the THO-DDX39B complex which multimerizes into a 28-subunit tetrameric assembly. Component of the transcription/export (TREX) complex at least composed of ALYREF/THOC4, DDX39B, SARNP/CIP29, CHTOP and the THO subcomplex; in the complex interacts with THOC2. THOC1-THOC2-THOC3-DDX39B subcomplex is sufficient for the interaction with export factor NXF1-NXT1. TREX seems to have a dynamic structure involving ATP-dependent remodeling. Within the TREX complex bridges ALYREF/THOC4 and the THO subcomplex, and, in a ATP-dependent manner, ALYREF/THOC4 and SARNP/CIP29. Component of the spliceosome. Interacts directly with U2AF2. Interacts with RBM8A, RNPS1 and SRRM1, FYTTD1/UIF, THOC1, MX1 and POLDIP3. Interacts with LUZP4. Interacts with SARNP/CIP29 (via the C-terminal domain); the interaction is direct and facilitates RNA binding of DDX39B.

It is found in the nucleus. The protein resides in the nucleus speckle. Its subcellular location is the cytoplasm. It catalyses the reaction ATP + H2O = ADP + phosphate + H(+). Functionally, involved in nuclear export of spliced and unspliced mRNA. Component of the TREX complex which is thought to couple mRNA transcription, processing and nuclear export, and specifically associates with spliced mRNA and not with unspliced pre-mRNA. The TREX complex is recruited to spliced mRNAs by a transcription-independent mechanism, binds to mRNA upstream of the exon-junction complex (EJC) and is recruited in a splicing- and cap-dependent manner to a region near the 5' end of the mRNA where it functions in mRNA export to the cytoplasm via the TAP/NXF1 pathway. The THOC1-THOC2-THOC3 core complex alone is sufficient to promote ATPase activity of DDX39B; in the complex THOC2 is the only component that directly interacts with DDX39B. Associates with SARNP/CIP29, which facilitates RNA binding of DDX39B and likely plays a role in mRNA export. May undergo several rounds of ATP hydrolysis during assembly of TREX to drive subsequent loading of components such as ALYREF/THOC4 and CHTOP onto mRNA. Also associates with pre-mRNA independent of ALYREF/THOC4. Involved in the nuclear export of intronless mRNA; the ATP-bound form is proposed to recruit export adapter ALYREF/THOC4 to intronless mRNA; its ATPase activity is cooperatively stimulated by RNA and ALYREF/THOC4 and ATP hydrolysis is thought to trigger the dissociation from RNA to allow the association of ALYREF/THOC4 and the NXF1-NXT1 heterodimer. Involved in transcription elongation and genome stability. In terms of biological role, splice factor that is required for the first ATP-dependent step in spliceosome assembly and for the interaction of U2 snRNP with the branchpoint. Has both RNA-stimulated ATP binding/hydrolysis activity and ATP-dependent RNA unwinding activity. Even with the stimulation of RNA, the ATPase activity is weak. Can only hydrolyze ATP but not other NTPs. The RNA stimulation of ATPase activity does not have a strong preference for the sequence and length of the RNA. However, ssRNA stimulates the ATPase activity much more strongly than dsRNA. Can unwind 5' or 3' overhangs or blunt end RNA duplexes in vitro. The ATPase and helicase activities are not influenced by U2AF2; the effect of ALYREF/THOC4 is reported conflictingly. The protein is Spliceosome RNA helicase Ddx39b (Ddx39b) of Mus musculus (Mouse).